The sequence spans 695 residues: HIPL1 protein (695 aa).

A signal peptide spans 1 to 23 (MKLHQFLVFLFLFLSCFALSSWA). N-linked (GlcNAc...) asparagine glycosylation is found at Asn37, Asn67, Asn107, Asn113, Asn128, Asn151, Asn175, Asn190, Asn208, Asn337, Asn429, Asn511, Asn527, Asn641, and Asn648. Ser665 carries the GPI-anchor amidated serine lipid modification. The propeptide at 666–695 (SSCYKHINGFHGSLVVLFVSLSLILLGLLN) is removed in mature form.

The protein belongs to the PQQ oxidoreductase GdhB family. Pyrroloquinoline quinone is required as a cofactor.

The protein resides in the cell membrane. The sequence is that of HIPL1 protein (HIPL1) from Arabidopsis thaliana (Mouse-ear cress).